The chain runs to 497 residues: Long chain base biosynthesis protein 2c (497 aa).

The chain crosses the membrane as a helical span at residues 4–24 (VPFVTAVTTVFSYGVIFGFGH). Lys319 bears the N6-(pyridoxal phosphate)lysine mark.

Belongs to the class-II pyridoxal-phosphate-dependent aminotransferase family. As to quaternary structure, heterodimer with LCB1. Component of the serine palmitoyltransferase (SPT) complex, composed of LCB1 and LCB2. Requires pyridoxal 5'-phosphate as cofactor.

It localises to the endoplasmic reticulum membrane. The enzyme catalyses L-serine + hexadecanoyl-CoA + H(+) = 3-oxosphinganine + CO2 + CoA. The protein operates within lipid metabolism; sphingolipid metabolism. Its function is as follows. Serine palmitoyltransferase (SPT). The heterodimer formed with LCB1 constitutes the catalytic core. The sequence is that of Long chain base biosynthesis protein 2c from Oryza sativa subsp. japonica (Rice).